Reading from the N-terminus, the 279-residue chain is Aspartate/glutamate leucyltransferase (279 aa).

A disordered region spans residues Ala245–Asp279.

Belongs to the R-transferase family. Bpt subfamily.

It is found in the cytoplasm. The catalysed reaction is N-terminal L-glutamyl-[protein] + L-leucyl-tRNA(Leu) = N-terminal L-leucyl-L-glutamyl-[protein] + tRNA(Leu) + H(+). It carries out the reaction N-terminal L-aspartyl-[protein] + L-leucyl-tRNA(Leu) = N-terminal L-leucyl-L-aspartyl-[protein] + tRNA(Leu) + H(+). Its function is as follows. Functions in the N-end rule pathway of protein degradation where it conjugates Leu from its aminoacyl-tRNA to the N-termini of proteins containing an N-terminal aspartate or glutamate. The protein is Aspartate/glutamate leucyltransferase of Caulobacter vibrioides (strain ATCC 19089 / CIP 103742 / CB 15) (Caulobacter crescentus).